We begin with the raw amino-acid sequence, 436 residues long: Probable ABC transporter binding protein NosD (436 aa).

An N-terminal signal peptide occupies residues 1–27 (MFKAQATFSRYSAAVSLLLLFSGAAQA). 8 PbH1 repeats span residues 85-113 (APDV…FILP), 115-136 (AERA…FVDG), 137-166 (TRDV…HLFA), 167-188 (VSGA…YIDT), 189-210 (SNGN…HYMF), 233-255 (SRKL…LMNY), 293-314 (SLFN…HLTA), and 316-354 (SEDN…YWSD).

This sequence belongs to the NosD family. As to quaternary structure, the complex may be composed of an ATP-binding protein (NosF), a transmembrane protein (NosY) and a solute-binding protein (NosD).

Its subcellular location is the periplasm. Functionally, required for the assembly of the copper chromophores of nitrous oxide reductase. Could be part of the ABC transporter complex NosDFY. The sequence is that of Probable ABC transporter binding protein NosD from Stutzerimonas stutzeri (Pseudomonas stutzeri).